A 253-amino-acid polypeptide reads, in one-letter code: 5-oxoprolinase subunit A (253 aa).

Belongs to the LamB/PxpA family. Forms a complex composed of PxpA, PxpB and PxpC.

It carries out the reaction 5-oxo-L-proline + ATP + 2 H2O = L-glutamate + ADP + phosphate + H(+). Catalyzes the cleavage of 5-oxoproline to form L-glutamate coupled to the hydrolysis of ATP to ADP and inorganic phosphate. The polypeptide is 5-oxoprolinase subunit A (Bacillus licheniformis (strain ATCC 14580 / DSM 13 / JCM 2505 / CCUG 7422 / NBRC 12200 / NCIMB 9375 / NCTC 10341 / NRRL NRS-1264 / Gibson 46)).